A 422-amino-acid polypeptide reads, in one-letter code: Gamma-glutamyl phosphate reductase (422 aa).

It belongs to the gamma-glutamyl phosphate reductase family.

The protein localises to the cytoplasm. The catalysed reaction is L-glutamate 5-semialdehyde + phosphate + NADP(+) = L-glutamyl 5-phosphate + NADPH + H(+). It participates in amino-acid biosynthesis; L-proline biosynthesis; L-glutamate 5-semialdehyde from L-glutamate: step 2/2. Functionally, catalyzes the NADPH-dependent reduction of L-glutamate 5-phosphate into L-glutamate 5-semialdehyde and phosphate. The product spontaneously undergoes cyclization to form 1-pyrroline-5-carboxylate. In Nitrosomonas europaea (strain ATCC 19718 / CIP 103999 / KCTC 2705 / NBRC 14298), this protein is Gamma-glutamyl phosphate reductase.